Consider the following 301-residue polypeptide: Acetylglutamate kinase (301 aa).

Residues 68-69 (GG), Arg-90, and Asn-195 contribute to the substrate site.

The protein belongs to the acetylglutamate kinase family. ArgB subfamily.

It is found in the cytoplasm. It catalyses the reaction N-acetyl-L-glutamate + ATP = N-acetyl-L-glutamyl 5-phosphate + ADP. It functions in the pathway amino-acid biosynthesis; L-arginine biosynthesis; N(2)-acetyl-L-ornithine from L-glutamate: step 2/4. Functionally, catalyzes the ATP-dependent phosphorylation of N-acetyl-L-glutamate. The protein is Acetylglutamate kinase of Pseudomonas savastanoi pv. phaseolicola (strain 1448A / Race 6) (Pseudomonas syringae pv. phaseolicola (strain 1448A / Race 6)).